The primary structure comprises 393 residues: Nucleoside permease NupC (393 aa).

A run of 9 helical transmembrane segments spans residues 3–23, 32–52, 87–107, 168–188, 191–211, 249–269, 272–292, 334–354, and 372–392; these read YLIG…ASSG, IVVM…TGIG, TTFF…IGIL, LCAS…MTML, EYVV…ASII, VVVA…NGIF, VFGI…AFLV, AIVS…IIAG, and LKLL…VGLI.

The protein belongs to the concentrative nucleoside transporter (CNT) (TC 2.A.41) family.

It localises to the cell membrane. Functionally, transport of the pyrimidine nucleoside uridine. This is Nucleoside permease NupC from Bacillus subtilis (strain 168).